Here is a 489-residue protein sequence, read N- to C-terminus: Betaine aldehyde dehydrogenase (489 aa).

Asn93 is a binding site for K(+). 150–152 (GAW) provides a ligand contact to NAD(+). Residue Lys162 is the Charge relay system of the active site. Residue 176–179 (KPSE) coordinates NAD(+). Val180 lines the K(+) pocket. 229–232 (EVGT) contacts NAD(+). A K(+)-binding site is contributed by Leu245. Glu251 serves as the catalytic Proton acceptor. Positions 253, 285, and 386 each coordinate NAD(+). Cys285 acts as the Nucleophile in catalysis. Cys285 carries the post-translational modification Cysteine sulfenic acid (-SOH). K(+) contacts are provided by Lys456 and Gly459. Glu463 acts as the Charge relay system in catalysis.

This sequence belongs to the aldehyde dehydrogenase family. In terms of assembly, dimer of dimers. The cofactor is K(+).

The enzyme catalyses betaine aldehyde + NAD(+) + H2O = glycine betaine + NADH + 2 H(+). Its pathway is amine and polyamine biosynthesis; betaine biosynthesis via choline pathway; betaine from betaine aldehyde: step 1/1. Involved in the biosynthesis of the osmoprotectant glycine betaine. Catalyzes the irreversible oxidation of betaine aldehyde to the corresponding acid. In Chromohalobacter salexigens (strain ATCC BAA-138 / DSM 3043 / CIP 106854 / NCIMB 13768 / 1H11), this protein is Betaine aldehyde dehydrogenase.